A 612-amino-acid chain; its full sequence is Probable exonuclease subunit 2 (612 aa).

35–42 (GGNGLGKS) contributes to the ATP binding site. Coiled-coil stretches lie at residues 163 to 193 (NQEQYKEMSETIKADRKEIANTLNNLQGQMA) and 288 to 459 (SRAS…VADL).

It to phage T4 protein GP46. In terms of assembly, could consist of two subunits: D13 and D12.

Its function is as follows. Possible exonuclease that may play a role in viral genome replication, DNA recombination, and host DNA degradation. This chain is Probable exonuclease subunit 2 (D13), found in Escherichia phage T5 (Enterobacteria phage T5).